Consider the following 164-residue polypeptide: C-phycoerythrin class 1 subunit alpha (164 aa).

Residues Cys82 and Cys139 each coordinate (2R,3E)-phycoerythrobilin.

This sequence belongs to the phycobiliprotein family. As to quaternary structure, heterodimer of an alpha and a beta chain. Post-translationally, contains two covalently linked phycoerythrobilin chromophores.

The protein localises to the cellular thylakoid membrane. Functionally, light-harvesting photosynthetic bile pigment-protein from the phycobiliprotein complex. This chain is C-phycoerythrin class 1 subunit alpha (cpeA), found in Synechococcus sp. (strain WH8020).